The sequence spans 84 residues: Small ribosomal subunit protein uS17 (84 aa).

This sequence belongs to the universal ribosomal protein uS17 family. Part of the 30S ribosomal subunit.

Its function is as follows. One of the primary rRNA binding proteins, it binds specifically to the 5'-end of 16S ribosomal RNA. This is Small ribosomal subunit protein uS17 from Karelsulcia muelleri (strain GWSS) (Sulcia muelleri).